The sequence spans 150 residues: D-aminoacyl-tRNA deacylase (150 aa).

Positions 138–139 (GP) match the Gly-cisPro motif, important for rejection of L-amino acids motif.

Belongs to the DTD family. Homodimer.

The protein resides in the cytoplasm. The catalysed reaction is glycyl-tRNA(Ala) + H2O = tRNA(Ala) + glycine + H(+). The enzyme catalyses a D-aminoacyl-tRNA + H2O = a tRNA + a D-alpha-amino acid + H(+). In terms of biological role, an aminoacyl-tRNA editing enzyme that deacylates mischarged D-aminoacyl-tRNAs. Also deacylates mischarged glycyl-tRNA(Ala), protecting cells against glycine mischarging by AlaRS. Acts via tRNA-based rather than protein-based catalysis; rejects L-amino acids rather than detecting D-amino acids in the active site. By recycling D-aminoacyl-tRNA to D-amino acids and free tRNA molecules, this enzyme counteracts the toxicity associated with the formation of D-aminoacyl-tRNA entities in vivo and helps enforce protein L-homochirality. In Petrotoga mobilis (strain DSM 10674 / SJ95), this protein is D-aminoacyl-tRNA deacylase.